Consider the following 98-residue polypeptide: DNA-binding protein Fis (98 aa).

A DNA-binding region (H-T-H motif) is located at residues 74–93 (QTRAATMMGINRGTLRKKLK).

This sequence belongs to the transcriptional regulatory Fis family. Homodimer.

Functionally, activates ribosomal RNA transcription. Plays a direct role in upstream activation of rRNA promoters. This chain is DNA-binding protein Fis, found in Vibrio parahaemolyticus serotype O3:K6 (strain RIMD 2210633).